Here is a 392-residue protein sequence, read N- to C-terminus: Formate-dependent phosphoribosylglycinamide formyltransferase (392 aa).

Residues 22-23 (EL) and Glu-82 each bind N(1)-(5-phospho-beta-D-ribosyl)glycinamide. Residues Arg-114, Lys-155, 160 to 165 (SSGKGQ), 195 to 198 (EGVV), and Glu-203 each bind ATP. An ATP-grasp domain is found at 119–308 (RLAAEELQLP…EFALHVRAFL (190 aa)). Residues Glu-267 and Glu-279 each contribute to the Mg(2+) site. N(1)-(5-phospho-beta-D-ribosyl)glycinamide-binding positions include Asp-286, Lys-355, and 362 to 363 (RR).

This sequence belongs to the PurK/PurT family. As to quaternary structure, homodimer.

The enzyme catalyses N(1)-(5-phospho-beta-D-ribosyl)glycinamide + formate + ATP = N(2)-formyl-N(1)-(5-phospho-beta-D-ribosyl)glycinamide + ADP + phosphate + H(+). It functions in the pathway purine metabolism; IMP biosynthesis via de novo pathway; N(2)-formyl-N(1)-(5-phospho-D-ribosyl)glycinamide from N(1)-(5-phospho-D-ribosyl)glycinamide (formate route): step 1/1. In terms of biological role, involved in the de novo purine biosynthesis. Catalyzes the transfer of formate to 5-phospho-ribosyl-glycinamide (GAR), producing 5-phospho-ribosyl-N-formylglycinamide (FGAR). Formate is provided by PurU via hydrolysis of 10-formyl-tetrahydrofolate. The chain is Formate-dependent phosphoribosylglycinamide formyltransferase from Escherichia coli O157:H7.